Here is a 570-residue protein sequence, read N- to C-terminus: Formate--tetrahydrofolate ligase (570 aa).

65 to 72 (TPHGEGKT) contacts ATP.

Belongs to the formate--tetrahydrofolate ligase family.

The catalysed reaction is (6S)-5,6,7,8-tetrahydrofolate + formate + ATP = (6R)-10-formyltetrahydrofolate + ADP + phosphate. It functions in the pathway one-carbon metabolism; tetrahydrofolate interconversion. This Shewanella sp. (strain ANA-3) protein is Formate--tetrahydrofolate ligase.